A 161-amino-acid polypeptide reads, in one-letter code: Large ribosomal subunit protein uL15 (161 aa).

A disordered region spans residues 1 to 47; that stretch reads MKLHELHDNPGANRKKKRVARGPGSGKGKTAGRGIKGQTSRSGVALN. Residues 23–35 are compositionally biased toward gly residues; the sequence is PGSGKGKTAGRGI.

Belongs to the universal ribosomal protein uL15 family. As to quaternary structure, part of the 50S ribosomal subunit.

Its function is as follows. Binds to the 23S rRNA. The protein is Large ribosomal subunit protein uL15 of Paracoccus denitrificans (strain Pd 1222).